Reading from the N-terminus, the 221-residue chain is Small ribosomal subunit protein uS3 (221 aa).

One can recognise a KH type-2 domain in the interval 39–107 (IRNYIKEKLY…TVILNIIEVK (69 aa)).

It belongs to the universal ribosomal protein uS3 family. Part of the 30S ribosomal subunit. Forms a tight complex with proteins S10 and S14.

Its function is as follows. Binds the lower part of the 30S subunit head. Binds mRNA in the 70S ribosome, positioning it for translation. The polypeptide is Small ribosomal subunit protein uS3 (Caldanaerobacter subterraneus subsp. tengcongensis (strain DSM 15242 / JCM 11007 / NBRC 100824 / MB4) (Thermoanaerobacter tengcongensis)).